A 492-amino-acid polypeptide reads, in one-letter code: Cytochrome P450 2A1 (492 aa).

Serine 130 is subject to Phosphoserine. Cysteine 437 serves as a coordination point for heme.

The protein belongs to the cytochrome P450 family. It depends on heme as a cofactor. As to expression, liver and testis.

The protein resides in the endoplasmic reticulum membrane. It is found in the microsome membrane. It catalyses the reaction an organic molecule + reduced [NADPH--hemoprotein reductase] + O2 = an alcohol + oxidized [NADPH--hemoprotein reductase] + H2O + H(+). Highly active in the 7-alpha-hydroxylation of testosterone, progesterone and androstenedione. This chain is Cytochrome P450 2A1 (Cyp2a1), found in Rattus norvegicus (Rat).